Consider the following 378-residue polypeptide: Erythronate-4-phosphate dehydrogenase (378 aa).

The substrate site is built by serine 45 and threonine 66. Aspartate 146 and threonine 175 together coordinate NAD(+). Residue arginine 208 is part of the active site. Aspartate 232 contributes to the NAD(+) binding site. Glutamate 237 is a catalytic residue. Histidine 254 serves as the catalytic Proton donor. An NAD(+)-binding site is contributed by glycine 257. Substrate is bound at residue tyrosine 258.

Belongs to the D-isomer specific 2-hydroxyacid dehydrogenase family. PdxB subfamily. Homodimer.

It is found in the cytoplasm. The enzyme catalyses 4-phospho-D-erythronate + NAD(+) = (R)-3-hydroxy-2-oxo-4-phosphooxybutanoate + NADH + H(+). It participates in cofactor biosynthesis; pyridoxine 5'-phosphate biosynthesis; pyridoxine 5'-phosphate from D-erythrose 4-phosphate: step 2/5. Its function is as follows. Catalyzes the oxidation of erythronate-4-phosphate to 3-hydroxy-2-oxo-4-phosphonooxybutanoate. The protein is Erythronate-4-phosphate dehydrogenase of Citrobacter koseri (strain ATCC BAA-895 / CDC 4225-83 / SGSC4696).